A 232-amino-acid chain; its full sequence is Ribosomal RNA small subunit methyltransferase G (232 aa).

The tract at residues 1-24 is disordered; the sequence is MVDTALHPIPGRRTPPHPRSTLPL. Residues G91, L96, 142–143, and R160 each bind S-adenosyl-L-methionine; that span reads AE.

Belongs to the methyltransferase superfamily. RNA methyltransferase RsmG family.

Its subcellular location is the cytoplasm. Its function is as follows. Specifically methylates the N7 position of guanine in position 518 of 16S rRNA. In Corynebacterium efficiens (strain DSM 44549 / YS-314 / AJ 12310 / JCM 11189 / NBRC 100395), this protein is Ribosomal RNA small subunit methyltransferase G.